The primary structure comprises 660 residues: Bifunctional polymyxin resistance protein ArnA (660 aa).

A formyltransferase ArnAFT region spans residues 1–304 (MKTVVFAYHD…TLGLVQGSRL (304 aa)). (6R)-10-formyltetrahydrofolate is bound at residue 86-88 (HLI). Residue His-104 is the Proton donor; for formyltransferase activity of the active site. (6R)-10-formyltetrahydrofolate is bound by residues Arg-114 and 136 to 140 (VKRAD). The tract at residues 314–660 (RRTRVLILGV…RTVDLTDKPS (347 aa)) is dehydrogenase ArnADH. Residues Asp-347 and 368 to 369 (DI) each bind NAD(+). UDP-alpha-D-glucuronate contacts are provided by residues Ala-393, Tyr-398, and 432–433 (TS). Glu-434 acts as the Proton acceptor; for decarboxylase activity in catalysis. Residues Arg-460, Asn-492, 526 to 535 (KLIDGGKQKR), and Tyr-613 each bind UDP-alpha-D-glucuronate. Residue Arg-619 is the Proton donor; for decarboxylase activity of the active site.

The protein in the N-terminal section; belongs to the Fmt family. UDP-L-Ara4N formyltransferase subfamily. It in the C-terminal section; belongs to the NAD(P)-dependent epimerase/dehydratase family. UDP-glucuronic acid decarboxylase subfamily. As to quaternary structure, homohexamer, formed by a dimer of trimers.

It catalyses the reaction UDP-alpha-D-glucuronate + NAD(+) = UDP-beta-L-threo-pentopyranos-4-ulose + CO2 + NADH. The catalysed reaction is UDP-4-amino-4-deoxy-beta-L-arabinose + (6R)-10-formyltetrahydrofolate = UDP-4-deoxy-4-formamido-beta-L-arabinose + (6S)-5,6,7,8-tetrahydrofolate + H(+). The protein operates within nucleotide-sugar biosynthesis; UDP-4-deoxy-4-formamido-beta-L-arabinose biosynthesis; UDP-4-deoxy-4-formamido-beta-L-arabinose from UDP-alpha-D-glucuronate: step 1/3. Its pathway is nucleotide-sugar biosynthesis; UDP-4-deoxy-4-formamido-beta-L-arabinose biosynthesis; UDP-4-deoxy-4-formamido-beta-L-arabinose from UDP-alpha-D-glucuronate: step 3/3. It functions in the pathway bacterial outer membrane biogenesis; lipopolysaccharide biosynthesis. Bifunctional enzyme that catalyzes the oxidative decarboxylation of UDP-glucuronic acid (UDP-GlcUA) to UDP-4-keto-arabinose (UDP-Ara4O) and the addition of a formyl group to UDP-4-amino-4-deoxy-L-arabinose (UDP-L-Ara4N) to form UDP-L-4-formamido-arabinose (UDP-L-Ara4FN). The modified arabinose is attached to lipid A and is required for resistance to polymyxin and cationic antimicrobial peptides. In Escherichia coli O1:K1 / APEC, this protein is Bifunctional polymyxin resistance protein ArnA.